A 424-amino-acid polypeptide reads, in one-letter code: N-succinylarginine dihydrolase (424 aa).

Substrate is bound by residues 19-28 (AGLSPGNIAS), Asn-110, and 137-138 (HR). The active site involves Glu-174. Arg-207 lines the substrate pocket. His-240 is a catalytic residue. The substrate site is built by Asp-242 and Asn-349. Residue Cys-355 is the Nucleophile of the active site.

The protein belongs to the succinylarginine dihydrolase family. As to quaternary structure, homodimer.

It carries out the reaction N(2)-succinyl-L-arginine + 2 H2O + 2 H(+) = N(2)-succinyl-L-ornithine + 2 NH4(+) + CO2. It functions in the pathway amino-acid degradation; L-arginine degradation via AST pathway; L-glutamate and succinate from L-arginine: step 2/5. In terms of biological role, catalyzes the hydrolysis of N(2)-succinylarginine into N(2)-succinylornithine, ammonia and CO(2). This chain is N-succinylarginine dihydrolase, found in Rhizorhabdus wittichii (strain DSM 6014 / CCUG 31198 / JCM 15750 / NBRC 105917 / EY 4224 / RW1) (Sphingomonas wittichii).